A 587-amino-acid chain; its full sequence is Trihelix transcription factor GTL1 (587 aa).

Composition is skewed to gly residues over residues 1 to 10 and 41 to 54; these read MEQGGGGGGN and GGLGGGGGGGGGGS. The interval 1 to 63 is disordered; sequence MEQGGGGGGN…SASSSSGNRW (63 aa). The Myb-like 1 domain maps to 55–119; it reads ASSSSGNRWP…KCKEKFENVQ (65 aa). The Nuclear localization signal 1 motif lies at 96 to 103; it reads SRKLLELG. Residues 173 to 194 are compositionally biased toward low complexity; the sequence is SSSPFPVFSQPQPQTQTQPPQT. Residues 173–264 form a disordered region; sequence SSSPFPVFSQ…RKRGNRGGGG (92 aa). The segment covering 201–210 has biased composition (pro residues); sequence PTPPPLPLPS. A compositionally biased stretch (low complexity) spans 221–232; it reads SSHSSSTASGMG. Positions 233–242 are enriched in acidic residues; that stretch reads SDDDDDDMDV. Positions 285-328 form a coiled coil; the sequence is QRSFLEALEKREQERLDREEAWKRQEMARLAREHEVMSQERAAS. The tract at residues 348–435 is disordered; it reads QLPPSLSSQP…EQSSLPSSSR (88 aa). Positions 356–366 are enriched in pro residues; sequence QPPPPYQPPPA. Low complexity-rich tracts occupy residues 379 to 395 and 411 to 434; these read AQSQSQQPIMAIPQQQI and QKQQQQPQQEMVMSSEQSSLPSSS. The Myb-like 2 domain maps to 434-492; sequence SRWPKAEILALINLRSGMEPRYQDNVPKGLLWEEISTSMKRMGYNRNAKRCKEKWENIN. A Nuclear localization signal 2 motif is present at residues 472–479; the sequence is MKRMGYNR. Residues 530–587 form a disordered region; sequence GGGSSTSGLPQDQKQSPVTAMKPPQEGLVNVQQTHGSASTEEEEPIEESPQGTEKKTL. 2 stretches are compositionally biased toward polar residues: residues 538–547 and 559–568; these read LPQDQKQSPV and NVQQTHGSAS.

In terms of tissue distribution, mostly expressed in siliques, and, to a lower extent, in growing root hairs, leaves, stems, and flowers. Present in abaxial epidermal cells, predominantly in guard cells, pavement cells, and meristemoids.

It localises to the nucleus. Its function is as follows. Transcription repressor that binds specific DNA sequence such as GT3 box 5'-GGTAAA-3' in the SDD1 promoter. Negative regulator of water use efficiency (WUE) via the promotion of stomatal density and distribution by the transcription repression of SDD1. Regulates the expression of several cell cycle genes and endoreduplication, especially in trichomes where it prevents ploidy-dependent plant cell growth. Regulates negatively root hair growth by directly binding RSL4 promoter and repressing RSL4 expression. The sequence is that of Trihelix transcription factor GTL1 from Arabidopsis thaliana (Mouse-ear cress).